Reading from the N-terminus, the 209-residue chain is dITP/XTP pyrophosphatase (209 aa).

22–27 contributes to the substrate binding site; that stretch reads SHNQGK. The active-site Proton acceptor is the D83. Residue D83 coordinates Mg(2+). Substrate-binding positions include S84, 167-170, K190, and 195-196; these read FGYD and HR.

This sequence belongs to the HAM1 NTPase family. In terms of assembly, homodimer. Mg(2+) is required as a cofactor.

It carries out the reaction XTP + H2O = XMP + diphosphate + H(+). The catalysed reaction is dITP + H2O = dIMP + diphosphate + H(+). The enzyme catalyses ITP + H2O = IMP + diphosphate + H(+). In terms of biological role, pyrophosphatase that catalyzes the hydrolysis of nucleoside triphosphates to their monophosphate derivatives, with a high preference for the non-canonical purine nucleotides XTP (xanthosine triphosphate), dITP (deoxyinosine triphosphate) and ITP. Seems to function as a house-cleaning enzyme that removes non-canonical purine nucleotides from the nucleotide pool, thus preventing their incorporation into DNA/RNA and avoiding chromosomal lesions. The polypeptide is dITP/XTP pyrophosphatase (Zymomonas mobilis subsp. mobilis (strain ATCC 31821 / ZM4 / CP4)).